The primary structure comprises 539 residues: Chaperonin GroEL (539 aa).

ATP is bound by residues 30–33 (TLGP), Lys-51, 87–91 (DGTTT), Gly-415, and Asp-495.

This sequence belongs to the chaperonin (HSP60) family. Forms a cylinder of 14 subunits composed of two heptameric rings stacked back-to-back. Interacts with the co-chaperonin GroES.

It localises to the cytoplasm. The enzyme catalyses ATP + H2O + a folded polypeptide = ADP + phosphate + an unfolded polypeptide.. Its function is as follows. Together with its co-chaperonin GroES, plays an essential role in assisting protein folding. The GroEL-GroES system forms a nano-cage that allows encapsulation of the non-native substrate proteins and provides a physical environment optimized to promote and accelerate protein folding. The chain is Chaperonin GroEL from Serratia rubidaea (Serratia marinorubra).